The chain runs to 189 residues: Mercury resistance operon ORF3 (189 aa).

A signal peptide (tat-type signal) is located at residues 1 to 27 (MTSPSPTARRTRLRRRTALALAAAATA). The Thioredoxin domain occupies 38 to 189 (TKANTPATRA…IQDALKKAGA (152 aa)).

Predicted to be exported by the Tat system. The position of the signal peptide cleavage has not been experimentally proven.

The protein resides in the secreted. In terms of biological role, probable mercury binding protein. In Streptomyces lividans, this protein is Mercury resistance operon ORF3.